We begin with the raw amino-acid sequence, 324 residues long: MSYSNLKLFSLSSNHELAQKVAKEIGIELGKVSVGAHSDGETVVHIDESVRGDHVFILQSTSDPVNDNLMELLIMMDALRRASAASINIVLPYYGYARQDRKARAREPITSKLVANMLQIAGADRLITFDLHAPQIQGFFNIPVDHLMGSPLIAEYFRRQLVSAGDDIVVVSPDHGGVGRARKLANFLKAPLSIIDKRRPRANVAEIMNIIGDVQGKKCILIDDMIDTAGTITLAANALKELGATEVYASCTHAVLSGPAIERINNSAITKLVVLDTIEMPEERQSEKIVQLSIAHLLADAIIRIHERRPLSPLFELHLPSEQI.

ATP is bound by residues 39-41 (DGE) and 98-99 (RQ). The Mg(2+) site is built by histidine 132 and aspartate 174. The active site involves lysine 197. D-ribose 5-phosphate contacts are provided by residues arginine 199, aspartate 223, and 227–231 (DTAGT).

This sequence belongs to the ribose-phosphate pyrophosphokinase family. Class I subfamily. Homohexamer. Mg(2+) serves as cofactor.

The protein localises to the cytoplasm. The enzyme catalyses D-ribose 5-phosphate + ATP = 5-phospho-alpha-D-ribose 1-diphosphate + AMP + H(+). The protein operates within metabolic intermediate biosynthesis; 5-phospho-alpha-D-ribose 1-diphosphate biosynthesis; 5-phospho-alpha-D-ribose 1-diphosphate from D-ribose 5-phosphate (route I): step 1/1. Involved in the biosynthesis of the central metabolite phospho-alpha-D-ribosyl-1-pyrophosphate (PRPP) via the transfer of pyrophosphoryl group from ATP to 1-hydroxyl of ribose-5-phosphate (Rib-5-P). The protein is Ribose-phosphate pyrophosphokinase 1 of Lactococcus lactis subsp. lactis (strain IL1403) (Streptococcus lactis).